Consider the following 373-residue polypeptide: Transaldolase (373 aa).

The active-site Schiff-base intermediate with substrate is the Lys-143.

Belongs to the transaldolase family. Type 2 subfamily.

The protein localises to the cytoplasm. The catalysed reaction is D-sedoheptulose 7-phosphate + D-glyceraldehyde 3-phosphate = D-erythrose 4-phosphate + beta-D-fructose 6-phosphate. It functions in the pathway carbohydrate degradation; pentose phosphate pathway; D-glyceraldehyde 3-phosphate and beta-D-fructose 6-phosphate from D-ribose 5-phosphate and D-xylulose 5-phosphate (non-oxidative stage): step 2/3. Functionally, transaldolase is important for the balance of metabolites in the pentose-phosphate pathway. The polypeptide is Transaldolase (Mycobacterium marinum (strain ATCC BAA-535 / M)).